Consider the following 228-residue polypeptide: Cutinase CUT1 (228 aa).

A signal peptide spans 1–16 (MQFITVALTLIALASA). An intrachain disulfide couples Cys49 to Cys127. Residue Ser138 is the Nucleophile of the active site. Cys189 and Cys196 are oxidised to a cystine. Asn190 is a glycosylation site (N-linked (GlcNAc...) asparagine). Residue Asp193 is part of the active site. The Proton donor/acceptor role is filled by His206.

Belongs to the cutinase family. The 2 disulfide bonds play a critical role in holding the catalytic residues in juxta-position; reduction of the disulfide bridges results in the complete inactivation of the enzyme.

It localises to the secreted. The enzyme catalyses cutin + H2O = cutin monomers.. In terms of biological role, catalyzes the hydrolysis of complex carboxylic polyesters found in the cell wall of plants. Degrades cutin, a macromolecule that forms the structure of the plant cuticle. Required for efficient penetration of the host plant cuticle by the appressorium during the initial stage of fungal infection. This is Cutinase CUT1 from Pyricularia oryzae (strain 70-15 / ATCC MYA-4617 / FGSC 8958) (Rice blast fungus).